The primary structure comprises 623 residues: Glutathione import ATP-binding protein GsiA (623 aa).

ABC transporter domains lie at 15–269 and 325–564; these read VSGL…QTLL and LRSG…RKLM. Residues 49-56 and 357-364 each bind ATP; these read GESGSGKS.

Belongs to the ABC transporter superfamily. Glutathione importer (TC 3.A.1.5.11) family. In terms of assembly, the complex is composed of two ATP-binding proteins (GsiA), two transmembrane proteins (GsiC and GsiD) and a solute-binding protein (GsiB).

The protein resides in the cell inner membrane. The enzyme catalyses glutathione(out) + ATP + H2O = glutathione(in) + ADP + phosphate + H(+). Its function is as follows. Part of the ABC transporter complex GsiABCD involved in glutathione import. Responsible for energy coupling to the transport system. This chain is Glutathione import ATP-binding protein GsiA, found in Salmonella paratyphi A (strain ATCC 9150 / SARB42).